A 90-amino-acid chain; its full sequence is Small ribosomal subunit protein uS15 (90 aa).

The protein belongs to the universal ribosomal protein uS15 family. Part of the 30S ribosomal subunit. Forms a bridge to the 50S subunit in the 70S ribosome, contacting the 23S rRNA.

Functionally, one of the primary rRNA binding proteins, it binds directly to 16S rRNA where it helps nucleate assembly of the platform of the 30S subunit by binding and bridging several RNA helices of the 16S rRNA. Its function is as follows. Forms an intersubunit bridge (bridge B4) with the 23S rRNA of the 50S subunit in the ribosome. In Tropheryma whipplei (strain TW08/27) (Whipple's bacillus), this protein is Small ribosomal subunit protein uS15.